A 278-amino-acid polypeptide reads, in one-letter code: HTH-type transcriptional activator RhaS (278 aa).

Residues 174 to 272 (NLLLAWLEDH…NWSPRDIRQG (99 aa)) form the HTH araC/xylS-type domain. 2 DNA-binding regions (H-T-H motif) span residues 191–212 (DAVA…KQQT) and 239–262 (VTDI…RREF).

Binds DNA as a dimer.

The protein localises to the cytoplasm. Functionally, activates expression of the rhaBAD and rhaT operons. The sequence is that of HTH-type transcriptional activator RhaS from Escherichia coli O6:H1 (strain CFT073 / ATCC 700928 / UPEC).